The primary structure comprises 239 residues: 1-(5-phosphoribosyl)-5-[(5-phosphoribosylamino)methylideneamino] imidazole-4-carboxamide isomerase (239 aa).

Catalysis depends on D8, which acts as the Proton acceptor. D129 acts as the Proton donor in catalysis.

It belongs to the HisA/HisF family.

It is found in the cytoplasm. It catalyses the reaction 1-(5-phospho-beta-D-ribosyl)-5-[(5-phospho-beta-D-ribosylamino)methylideneamino]imidazole-4-carboxamide = 5-[(5-phospho-1-deoxy-D-ribulos-1-ylimino)methylamino]-1-(5-phospho-beta-D-ribosyl)imidazole-4-carboxamide. It functions in the pathway amino-acid biosynthesis; L-histidine biosynthesis; L-histidine from 5-phospho-alpha-D-ribose 1-diphosphate: step 4/9. This Legionella pneumophila (strain Lens) protein is 1-(5-phosphoribosyl)-5-[(5-phosphoribosylamino)methylideneamino] imidazole-4-carboxamide isomerase.